A 374-amino-acid polypeptide reads, in one-letter code: Tetraacyldisaccharide 4'-kinase (374 aa).

43 to 50 provides a ligand contact to ATP; the sequence is TMGGTGKT.

It belongs to the LpxK family.

It catalyses the reaction a lipid A disaccharide + ATP = a lipid IVA + ADP + H(+). It participates in glycolipid biosynthesis; lipid IV(A) biosynthesis; lipid IV(A) from (3R)-3-hydroxytetradecanoyl-[acyl-carrier-protein] and UDP-N-acetyl-alpha-D-glucosamine: step 6/6. Functionally, transfers the gamma-phosphate of ATP to the 4'-position of a tetraacyldisaccharide 1-phosphate intermediate (termed DS-1-P) to form tetraacyldisaccharide 1,4'-bis-phosphate (lipid IVA). This chain is Tetraacyldisaccharide 4'-kinase, found in Leptospira biflexa serovar Patoc (strain Patoc 1 / Ames).